Here is a 90-residue protein sequence, read N- to C-terminus: Progonadoliberin-3 (90 aa).

A signal peptide spans 1-23; sequence MEASSRVTVQVLLLALVVQVTLS. Glutamine 24 is modified (pyrrolidone carboxylic acid). Residue glycine 33 is modified to Glycine amide.

This sequence belongs to the GnRH family.

It localises to the secreted. Stimulates the secretion of gonadotropins. This is Progonadoliberin-3 (gnrh3) from Pagrus major (Red sea bream).